The primary structure comprises 92 residues: RNA-binding protein Hfq (92 aa).

Residues 11-71 (DRFLNHLRVN…ISTIIPSSYV (61 aa)) enclose the Sm domain.

It belongs to the Hfq family. Homohexamer.

In terms of biological role, RNA chaperone that binds small regulatory RNA (sRNAs) and mRNAs to facilitate mRNA translational regulation in response to envelope stress, environmental stress and changes in metabolite concentrations. Also binds with high specificity to tRNAs. The protein is RNA-binding protein Hfq of Thermotoga maritima (strain ATCC 43589 / DSM 3109 / JCM 10099 / NBRC 100826 / MSB8).